Reading from the N-terminus, the 200-residue chain is dTTP/UTP pyrophosphatase (200 aa).

The Proton acceptor role is filled by aspartate 81.

This sequence belongs to the Maf family. YhdE subfamily. A divalent metal cation is required as a cofactor.

It localises to the cytoplasm. The enzyme catalyses dTTP + H2O = dTMP + diphosphate + H(+). It catalyses the reaction UTP + H2O = UMP + diphosphate + H(+). In terms of biological role, nucleoside triphosphate pyrophosphatase that hydrolyzes dTTP and UTP. May have a dual role in cell division arrest and in preventing the incorporation of modified nucleotides into cellular nucleic acids. This is dTTP/UTP pyrophosphatase from Cupriavidus pinatubonensis (strain JMP 134 / LMG 1197) (Cupriavidus necator (strain JMP 134)).